Reading from the N-terminus, the 468-residue chain is ATP synthase subunit beta 1 (468 aa).

155 to 162 is an ATP binding site; that stretch reads GGAGVGKT.

The protein belongs to the ATPase alpha/beta chains family. As to quaternary structure, F-type ATPases have 2 components, CF(1) - the catalytic core - and CF(0) - the membrane proton channel. CF(1) has five subunits: alpha(3), beta(3), gamma(1), delta(1), epsilon(1). CF(0) has three main subunits: a(1), b(2) and c(9-12). The alpha and beta chains form an alternating ring which encloses part of the gamma chain. CF(1) is attached to CF(0) by a central stalk formed by the gamma and epsilon chains, while a peripheral stalk is formed by the delta and b chains.

It localises to the cell inner membrane. It carries out the reaction ATP + H2O + 4 H(+)(in) = ADP + phosphate + 5 H(+)(out). In terms of biological role, produces ATP from ADP in the presence of a proton gradient across the membrane. The catalytic sites are hosted primarily by the beta subunits. The chain is ATP synthase subunit beta 1 from Syntrophotalea carbinolica (strain DSM 2380 / NBRC 103641 / GraBd1) (Pelobacter carbinolicus).